We begin with the raw amino-acid sequence, 474 residues long: MSYPQGYLYQPSASLALYSCPAYSTTVISGPRTDELGRSPSGSAFSPYAGSTAFTASSAGFSSPLQYSGDPAAAFTSYVGSPYDHSAGMAGSLEYHPYAAPLGIYAYGDPAYRKNASRDATATLKAWLNEHRKNPYPTKGEKIMLAIITKMTLTQVSTWFANARRRLKKENKMTWTPRNRSEDEDDDENIDLEKNEEDDPSKLEENGNQDGDAGDQKRSPDGVDFVRLEGEVHLGKELDQTRNNSELNELDERNGHLSNSSSPPTPPLCPPDQSPQAQEDQNLHGHTHQSIQQLLHHSNQPHPLDLVNRNTSVQHGPVTNNATSVIHSPPASTSKPKLWSLAEIATSSDKVKERSNAAEVAGTTAAKSMVVSASSPSRSPSAQCHFPNNTVLSRPLYYSIPFYPGYTNYGTFSHLHSHHGPSSSVNSTYHFNGINQPVLNKAEGLAKECKHISQSQDDLNKGTPYEMKKGMSSI.

The homeobox; TALE-type DNA-binding region spans 109–171; the sequence is DPAYRKNASR…NARRRLKKEN (63 aa). 3 disordered regions span residues 174–222, 252–294, and 453–474; these read TWTP…SPDG, ERNG…IQQL, and SQSQ…MSSI. The span at 182–199 shows a compositional bias: acidic residues; that stretch reads EDEDDDENIDLEKNEEDD. A compositionally biased stretch (pro residues) spans 263 to 273; that stretch reads PPTPPLCPPDQ.

This sequence belongs to the TALE/IRO homeobox family. In terms of tissue distribution, early in gastrulation, expressed in cells beneath the blastopore lip. Subsequently expressed in the neural plate in overlapping patterns with other irx members, which all share an anterior border of expression. At the time of neural tube closure (stage 19) in regions of the midbrain, hindbrain, neural tube and optic vesicle, where expression continues during tailbud stages. In stage 34, expressed throughout the eye retina. Does not appear to be expressed in the developing heart or pronephros.

It localises to the nucleus. Functionally, acts partially redundantly with other irx members in neural patterning. Required for formation of the posterior forebrain, midbrain, hindbrain, and to a lesser extent, spinal cord. Patterns the neuroectoderm in both the anterior/posterior and dorsal/ventral axes. Does not appear to play a role in pronephros kidney development. Involved in craniofacial and gonadal development. Modulates the migration of progenitor cell populations in branchial arches and gonads by repressing CXCL12. This Xenopus laevis (African clawed frog) protein is Iroquois-class homeodomain protein irx-5 (irx5).